We begin with the raw amino-acid sequence, 487 residues long: MSTHYIAGQWLAGQGETLESLDPVGQGVVWSGRGADATQVDAAVCAAREAFPAWARRPLEQRIELLERFAATLKSRADELARVIGEETGKPLWESATEVTSMVNKVAISVQAFRERTGEKSGPLADATAVLRHKPHGVVAVFGPYNFPGHLPNGHIVPALLAGNCVVFKPSELTPKVAELTLKAWIQAGLPAGVLNLVQGGRETGVALAAHRGLDGLFFTGSSRTGNLLHSQFGGQPQKILALEMGGNNPLVVEEVADLDAAVYTIIQSAFISAGQRCTCARRLLVPQGAWGDALLARLVAVSATLRVGRFDEQPAPFMGAVISLSAAEHLLKAQEHLIGKGAQPLLAMTQPIDGAALLTPGILDVSAVAERPDEEFFGPLLQVIRYSDFAAAIREANATQYGLAAGLLSDSRERFEQFLVESRAGIVNWNKQLTGAASSAPFGGIGASGNHRPSAYYAADYCAYPVASLESPSVSLPATLTPGISL.

Residue 221–226 (GSSRTG) coordinates NAD(+). Active-site residues include E244 and C278.

The protein belongs to the aldehyde dehydrogenase family. AstD subfamily.

It carries out the reaction N-succinyl-L-glutamate 5-semialdehyde + NAD(+) + H2O = N-succinyl-L-glutamate + NADH + 2 H(+). The protein operates within amino-acid degradation; L-arginine degradation via AST pathway; L-glutamate and succinate from L-arginine: step 4/5. Catalyzes the NAD-dependent reduction of succinylglutamate semialdehyde into succinylglutamate. This Pseudomonas aeruginosa (strain ATCC 15692 / DSM 22644 / CIP 104116 / JCM 14847 / LMG 12228 / 1C / PRS 101 / PAO1) protein is N-succinylglutamate 5-semialdehyde dehydrogenase (astD).